Reading from the N-terminus, the 590-residue chain is Peroxisomal targeting signal receptor (590 aa).

A Glycyl cysteine thioester (Cys-Gly) (interchain with G-Cter in ubiquitin) cross-link involves residue cysteine 6. An amphipathic helix 1 (AH1) region spans residues 7–29; that stretch reads SVGSNPLAQLNKHAQGQGSSLSN. Lysine 18 is covalently cross-linked (Glycyl lysine isopeptide (Lys-Gly) (interchain with G-Cter in ubiquitin)). The segment covering 18–30 has biased composition (polar residues); that stretch reads KHAQGQGSSLSNT. The tract at residues 18-45 is disordered; the sequence is KHAQGQGSSLSNTHVRHSGGVSGSNVFR. Residues 56-74 form an amphipathic helix 2 (AH2) region; the sequence is RQQLNSFMSQPMRLGEDKM. Short sequence motifs (wxxxF/Y motif) lie at residues 108 to 112, 139 to 143, and 178 to 182; these read WTREF, WKFRY, and WNDKF. Positions 227-243 are amphipathic helix 4 (AH4); it reads FQEVWDSIQQDTEEMLS. 5 TPR repeats span residues 285 to 319, 320 to 353, 424 to 457, 459 to 491, and 493 to 525; these read NPNA…DPKH, VDAW…DPNN, PDIQ…NPND, LMWN…KPSF, and RARY…HDVE.

This sequence belongs to the peroxisomal targeting signal receptor family. In terms of assembly, interacts (via WxxxF/Y and LVxEF motifs) with PEX14; promoting translocation through the PEX13-PEX14 docking complex. Post-translationally, monoubiquitinated at Cys-6 by PEX2 during PEX5 passage through the retrotranslocation channel: monoubiquitination acts as a signal for PEX5 extraction and is required for proper export from peroxisomes and recycling. When PEX5 recycling is compromised, polyubiquitinated at Lys-18 by PEX10 during its passage through the retrotranslocation channel, leading to its degradation.

It is found in the cytoplasm. The protein localises to the cytosol. Its subcellular location is the peroxisome matrix. Functionally, receptor that mediates peroxisomal import of proteins containing a C-terminal PTS1-type tripeptide peroxisomal targeting signal (SKL-type). Binds to cargo proteins containing a PTS1 peroxisomal targeting signal in the cytosol, and translocates them into the peroxisome matrix by passing through the PEX13-PEX14 docking complex along with cargo proteins. PEX5 receptor is then retrotranslocated into the cytosol, leading to release of bound cargo in the peroxisome matrix, and reset for a subsequent peroxisome import cycle. The chain is Peroxisomal targeting signal receptor (PEX5) from Candida glabrata (strain ATCC 2001 / BCRC 20586 / JCM 3761 / NBRC 0622 / NRRL Y-65 / CBS 138) (Yeast).